A 590-amino-acid polypeptide reads, in one-letter code: DNA primase (590 aa).

A CHC2-type zinc finger spans residues 37-61 (CPFHKEKTPSFSVSPTKQFYHCFSC). The region spanning 255–337 (GRILVVEGYM…DKSLHFLFLP (83 aa)) is the Toprim domain. Positions 261, 305, and 307 each coordinate Mg(2+).

The protein belongs to the DnaG primase family. In terms of assembly, monomer. Interacts with DnaB. Zn(2+) is required as a cofactor. Mg(2+) serves as cofactor.

The enzyme catalyses ssDNA + n NTP = ssDNA/pppN(pN)n-1 hybrid + (n-1) diphosphate.. Functionally, RNA polymerase that catalyzes the synthesis of short RNA molecules used as primers for DNA polymerase during DNA replication. The polypeptide is DNA primase (Neisseria meningitidis serogroup B (strain ATCC BAA-335 / MC58)).